A 530-amino-acid polypeptide reads, in one-letter code: Autoinducer-2 kinase (530 aa).

It belongs to the FGGY kinase family.

The protein resides in the cytoplasm. It carries out the reaction (S)-4,5-dihydroxypentane-2,3-dione + ATP = (2S)-2-hydroxy-3,4-dioxopentyl phosphate + ADP + H(+). In terms of biological role, catalyzes the phosphorylation of autoinducer-2 (AI-2) to phospho-AI-2, which subsequently inactivates the transcriptional regulator LsrR and leads to the transcription of the lsr operon. Phosphorylates the ring-open form of (S)-4,5-dihydroxypentane-2,3-dione (DPD), which is the precursor to all AI-2 signaling molecules, at the C5 position. This Escherichia coli (strain SMS-3-5 / SECEC) protein is Autoinducer-2 kinase.